Consider the following 360-residue polypeptide: MTTTQLGLQEQSLWSRFCCWITSTSNRLYIGWFGVLMIPTLLTATTCFIIAFIAAPPVDIDGIREPIAGSLLYGNNIITAAVVPSSNAIGLHFYPIWEAHSLDEWLYNGGPYQLIVFHFLIGIFCYLGRQWELSYRLGMRPWICVAYSAPVAAATATLLIYSIGQGSFSDGLPLGISGTFNFMLVLQAEHNVLMHPFHMLGVAGVFGGALFAAMHGSLVTSSLIRETTEVESQNQGYKFGQEEETYNIVAAHGYFGRLIFQYASFNNSRALHFFLGAWPVVGIWFAALAVCCFAFNLNGFNFNQSILDAQGRPVSTWADVINRANIGFEVMHERNVHNFPLDLASGDAQMVALNAPAIEG.

3 helical membrane-spanning segments follow: residues 29–46, 118–133, and 142–156; these read YIGW…TATT, HFLI…QWEL, and WICV…AATA. Histidine 118 contributes to the chlorophyll a binding site. Tyrosine 126 contributes to the pheophytin a binding site. [CaMn4O5] cluster contacts are provided by aspartate 170 and glutamate 189. The helical transmembrane segment at 197–218 threads the bilayer; that stretch reads FHMLGVAGVFGGALFAAMHGSL. Residue histidine 198 participates in chlorophyll a binding. A quinone-binding positions include histidine 215 and 264–265; that span reads SF. Histidine 215 is a binding site for Fe cation. Residue histidine 272 coordinates Fe cation. Residues 274 to 288 form a helical membrane-spanning segment; that stretch reads FLGAWPVVGIWFAAL. The [CaMn4O5] cluster site is built by histidine 332, glutamate 333, aspartate 342, and alanine 344. A propeptide spanning residues 345-360 is cleaved from the precursor; the sequence is SGDAQMVALNAPAIEG.

The protein belongs to the reaction center PufL/M/PsbA/D family. As to quaternary structure, PSII is composed of 1 copy each of membrane proteins PsbA, PsbB, PsbC, PsbD, PsbE, PsbF, PsbH, PsbI, PsbJ, PsbK, PsbL, PsbM, PsbT, PsbX, PsbY, PsbZ, Psb30/Ycf12, peripheral proteins PsbO, CyanoQ (PsbQ), PsbU, PsbV and a large number of cofactors. It forms dimeric complexes. The D1/D2 heterodimer binds P680, chlorophylls that are the primary electron donor of PSII, and subsequent electron acceptors. It shares a non-heme iron and each subunit binds pheophytin, quinone, additional chlorophylls, carotenoids and lipids. D1 provides most of the ligands for the Mn4-Ca-O5 cluster of the oxygen-evolving complex (OEC). There is also a Cl(-1) ion associated with D1 and D2, which is required for oxygen evolution. The PSII complex binds additional chlorophylls, carotenoids and specific lipids. is required as a cofactor. In terms of processing, C-terminally processed by CtpA; processing is essential to allow assembly of the oxygen-evolving complex and photosynthetic growth. Post-translationally, tyr-161 forms a radical intermediate that is referred to as redox-active TyrZ, YZ or Y-Z. C-terminally processed by CtpA; processing is essential to allow assembly of the oxygen-evolving complex and thus photosynthetic growth.

The protein localises to the cellular thylakoid membrane. The enzyme catalyses 2 a plastoquinone + 4 hnu + 2 H2O = 2 a plastoquinol + O2. Its function is as follows. Photosystem II (PSII) is a light-driven water:plastoquinone oxidoreductase that uses light energy to abstract electrons from H(2)O, generating O(2) and a proton gradient subsequently used for ATP formation. It consists of a core antenna complex that captures photons, and an electron transfer chain that converts photonic excitation into a charge separation. The D1/D2 (PsbA/PsbD) reaction center heterodimer binds P680, the primary electron donor of PSII as well as several subsequent electron acceptors. The sequence is that of Photosystem II protein D1 1 from Synechocystis sp. (strain ATCC 27184 / PCC 6803 / Kazusa).